We begin with the raw amino-acid sequence, 171 residues long: UPF0398 protein STER_0279 (171 aa).

This sequence belongs to the UPF0398 family.

This chain is UPF0398 protein STER_0279, found in Streptococcus thermophilus (strain ATCC BAA-491 / LMD-9).